We begin with the raw amino-acid sequence, 67 residues long: Large ribosomal subunit protein uL29 (67 aa).

This sequence belongs to the universal ribosomal protein uL29 family.

The sequence is that of Large ribosomal subunit protein uL29 from Exiguobacterium sp. (strain ATCC BAA-1283 / AT1b).